The sequence spans 799 residues: DISARM protein DrmE (799 aa).

Its subcellular location is the cytoplasm. In terms of biological role, component of antiviral defense system DISARM (defense island system associated with restriction-modification), composed of DrmE, DrmA, DrmB, DrmC and DrmMII. DISARM is probably a multi-gene restriction module, this subunit has an unknown function. Expression of DISARM in B.subtilis (strain BEST7003) confers resistance to phages Nf, phi29, phi105, phi3T, SPO1, SPR and SPP1. Protection is over 10(7)-fold against phi3T, 10(4)-10(5)-fold against Nf, phi29, phi105 and SPR, 100-fold against SPO1 and 10-fold against SPP1. DISARM does not interfere with phage adsorption, but instead interferes with (phi3T) DNA replication early in its cycle, preventing replication, circularization and lysogeny and probably causes phage DNA degradation (DNA is degraded in SPP1-infected cells). This chain is DISARM protein DrmE, found in Bacillus paralicheniformis (strain ATCC 9945a / NCIMB 11709 / CD-2).